Reading from the N-terminus, the 627-residue chain is Mitochondrial Rho GTPase 1 (627 aa).

The 169-residue stretch at Met1 to His169 folds into the Miro 1 domain. The Cytoplasmic portion of the chain corresponds to Met1–Arg599. GTP-binding positions include Gly10–Ser17, Asp58–Arg62, and Asn114–Asp117. EF-hand domains are found at residues Leu185 to Lys220 and Ala305 to Leu340. Residues Asp198, Asp200, Asp202, Tyr204, Glu209, Asp318, Asp320, Asp322, and Glu329 each contribute to the Ca(2+) site. A Miro 2 domain is found at Arg420–Thr584. Residues Gly429–Ser436, Glu465–Gly469, and Leu534–Asp537 each bind GTP. The chain crosses the membrane as a helical; Anchor for type IV membrane protein span at residues Thr600–Trp620. Residues Arg621–Leu627 are Mitochondrial intermembrane-facing.

Belongs to the mitochondrial Rho GTPase family.

The protein resides in the mitochondrion outer membrane. In terms of biological role, mitochondrial GTPase involved in mitochondrial trafficking. Probably involved in control of anterograde transport of mitochondria and their subcellular distribution. In Gibberella zeae (strain ATCC MYA-4620 / CBS 123657 / FGSC 9075 / NRRL 31084 / PH-1) (Wheat head blight fungus), this protein is Mitochondrial Rho GTPase 1 (GEM1).